The following is a 567-amino-acid chain: Geranylgeranyl transferase type-2 subunit alpha (567 aa).

6 PFTA repeats span residues 44–78 (LDESVLELTSQILGANPDFATLWNCRREVLQRLEV), 88–122 (LVKAELGFLESCLRVNPKSYGTWHHRCWLLGRLPE), 124–158 (NWARELELCARFLEVDERNFHCWDYRRFVASQAAV), 159–193 (PPAEELAFTDSLITRNFSNYSSWHYRSCLLPQLHP), 207–241 (VLLKELELVQNAFFTDPNDQSAWFYHRWLLGRADP), and 363–397 (VLQSELESCKELQELEPENKWCLLTIILLMRALDP). Ser-98 carries the phosphoserine modification. LRR repeat units lie at residues 442–463 (DVRVLHLGHKDLTVLCHLEQLL), 464–486 (LVTHLDLSHNRLRALPPALAALR), 487–508 (CLEVLQANDNAIESLDGVTNLP), 509–530 (RLQELSLCNNRLQQPAVLQPLA), and 534–555 (RLVLLNLQDNPLCQAVGISEHL).

The protein belongs to the protein prenyltransferase subunit alpha family. As to quaternary structure, heterotrimer composed of RABGGTA, RABGGTB and CHM; within this trimer, RABGGTA and RABGGTB form the catalytic component B, while CHM (component A) mediates peptide substrate binding. The Rab GGTase dimer (RGGT) interacts with CHM (component A) prior to Rab protein binding; the association is stabilized by geranylgeranyl pyrophosphate (GGpp). The CHM:RGGT:Rab complex is destabilized by GGpp. Interacts with non-phosphorylated form of RAB8A; phosphorylation of RAB8A disrupts this interaction.

It catalyses the reaction geranylgeranyl diphosphate + L-cysteinyl-[protein] = S-geranylgeranyl-L-cysteinyl-[protein] + diphosphate. The enzymatic reaction requires the aid of a Rab escort protein (also called component A), such as CHM. Functionally, catalyzes the transfer of a geranylgeranyl moiety from geranylgeranyl diphosphate to both cysteines of Rab proteins with the C-terminal sequence -XXCC, -XCXC and -CCXX, such as RAB1A, RAB3A, RAB5A and RAB7A. This Sus scrofa (Pig) protein is Geranylgeranyl transferase type-2 subunit alpha (RABGGTA).